Reading from the N-terminus, the 111-residue chain is Large ribosomal subunit protein uL24 (111 aa).

Residues 48-65 (EKPSRSNREGGRTEREAP) show a composition bias toward basic and acidic residues. Positions 48 to 111 (EKPSRSNREG…AKTTGEELDD (64 aa)) are disordered. Over residues 69–80 (SNVNPIDSNGES) the composition is skewed to polar residues. Residues 86–95 (KKVEDPDTGR) show a composition bias toward basic and acidic residues.

It belongs to the universal ribosomal protein uL24 family. As to quaternary structure, part of the 50S ribosomal subunit.

Functionally, one of two assembly initiator proteins, it binds directly to the 5'-end of the 23S rRNA, where it nucleates assembly of the 50S subunit. In terms of biological role, one of the proteins that surrounds the polypeptide exit tunnel on the outside of the subunit. The chain is Large ribosomal subunit protein uL24 from Salinibacter ruber (strain DSM 13855 / M31).